A 60-amino-acid polypeptide reads, in one-letter code: Large ribosomal subunit protein uL30 (60 aa).

It belongs to the universal ribosomal protein uL30 family. In terms of assembly, part of the 50S ribosomal subunit.

This is Large ribosomal subunit protein uL30 from Polaromonas sp. (strain JS666 / ATCC BAA-500).